We begin with the raw amino-acid sequence, 126 residues long: Histone H2B type 1-O (126 aa).

Residues 1–12 (MPDPAKSAPAPK) are compositionally biased toward low complexity. The tract at residues 1-35 (MPDPAKSAPAPKKGSKKAVTKAQKKDGKKRKRSRK) is disordered. N-acetylproline; partial is present on P2. An N6-(2-hydroxyisobutyryl)lysine; alternate modification is found at K6. K6 is subject to N6-(beta-hydroxybutyryl)lysine; alternate. K6 carries the N6-acetyllysine; alternate modification. An N6-butyryllysine; alternate modification is found at K6. K6 bears the N6-crotonyllysine; alternate mark. K6 carries the post-translational modification N6-lactoyllysine; alternate. K6 participates in a covalent cross-link: Glycyl lysine isopeptide (Lys-Gly) (interchain with G-Cter in SUMO2); alternate. Residue S7 is modified to ADP-ribosylserine. K12 is subject to N6-(beta-hydroxybutyryl)lysine; alternate. K12 and K13 each carry N6-acetyllysine; alternate. 2 positions are modified to N6-crotonyllysine; alternate: K12 and K13. At K12 the chain carries N6-lactoyllysine; alternate. At K13 the chain carries N6-(2-hydroxyisobutyryl)lysine; alternate. S15 is modified (phosphoserine; by STK4/MST1). N6-acetyllysine; alternate occurs at positions 16, 17, 21, and 24. 4 positions are modified to N6-crotonyllysine; alternate: K16, K17, K21, and K24. An N6-lactoyllysine; alternate mark is found at K16, K17, K21, and K24. 2 positions are modified to N6-(beta-hydroxybutyryl)lysine; alternate: K17 and K21. The residue at position 17 (K17) is an N6-glutaryllysine; alternate. 2 positions are modified to N6-(2-hydroxyisobutyryl)lysine; alternate: K21 and K24. K21 carries the N6-butyryllysine; alternate modification. K21 is covalently cross-linked (Glycyl lysine isopeptide (Lys-Gly) (interchain with G-Cter in SUMO2); alternate). Residue K25 is modified to N6-(2-hydroxyisobutyryl)lysine. The residue at position 35 (K35) is an N6-(2-hydroxyisobutyryl)lysine; alternate. K35 carries the post-translational modification N6-(beta-hydroxybutyryl)lysine; alternate. K35 carries the N6-crotonyllysine; alternate modification. K35 bears the N6-glutaryllysine; alternate mark. K35 carries the post-translational modification N6-succinyllysine; alternate. Residue K35 forms a Glycyl lysine isopeptide (Lys-Gly) (interchain with G-Cter in ubiquitin); alternate linkage. E36 carries the polyADP-ribosyl glutamic acid modification. S37 carries the post-translational modification Phosphoserine; by AMPK. N6-(2-hydroxyisobutyryl)lysine; alternate occurs at positions 44, 47, and 58. Residue K44 is modified to N6-lactoyllysine; alternate. N6-glutaryllysine; alternate is present on residues K44 and K47. The residue at position 47 (K47) is an N6-methyllysine; alternate. K58 bears the N6,N6-dimethyllysine; alternate mark. R80 is subject to Dimethylated arginine. The residue at position 86 (K86) is an N6-(2-hydroxyisobutyryl)lysine; alternate. At K86 the chain carries N6-(beta-hydroxybutyryl)lysine; alternate. N6-acetyllysine; alternate is present on K86. K86 carries the post-translational modification N6-lactoyllysine; alternate. The residue at position 86 (K86) is an N6,N6,N6-trimethyllysine; alternate. An omega-N-methylarginine mark is found at R87 and R93. K109 carries the post-translational modification N6-(2-hydroxyisobutyryl)lysine; alternate. K109 is subject to N6-lactoyllysine; alternate. K109 is subject to N6-glutaryllysine; alternate. K109 bears the N6-methyllysine; alternate mark. O-linked (GlcNAc) serine glycosylation is present at S113. T116 bears the Phosphothreonine mark. N6-(2-hydroxyisobutyryl)lysine; alternate is present on residues K117 and K121. 2 positions are modified to N6-(beta-hydroxybutyryl)lysine; alternate: K117 and K121. N6-lactoyllysine; alternate occurs at positions 117 and 121. Residues K117 and K121 each carry the N6-glutaryllysine; alternate modification. Residues K117 and K121 each carry the N6-succinyllysine; alternate modification. Position 117 is an N6-malonyllysine; alternate (K117). K117 bears the N6-methylated lysine; alternate mark. K121 is covalently cross-linked (Glycyl lysine isopeptide (Lys-Gly) (interchain with G-Cter in ubiquitin); alternate).

It belongs to the histone H2B family. As to quaternary structure, the nucleosome is a histone octamer containing two molecules each of H2A, H2B, H3 and H4 assembled in one H3-H4 heterotetramer and two H2A-H2B heterodimers. The octamer wraps approximately 147 bp of DNA. Monoubiquitination at Lys-35 (H2BK34Ub) by the MSL1/MSL2 dimer is required for histone H3 'Lys-4' (H3K4me) and 'Lys-79' (H3K79me) methylation and transcription activation at specific gene loci, such as HOXA9 and MEIS1 loci. Similarly, monoubiquitination at Lys-121 (H2BK120Ub) by the RNF20/40 complex gives a specific tag for epigenetic transcriptional activation and is also prerequisite for histone H3 'Lys-4' and 'Lys-79' methylation. It also functions cooperatively with the FACT dimer to stimulate elongation by RNA polymerase II. H2BK120Ub also acts as a regulator of mRNA splicing: deubiquitination by USP49 is required for efficient cotranscriptional splicing of a large set of exons. In terms of processing, phosphorylation at Ser-37 (H2BS36ph) by AMPK in response to stress promotes transcription. Phosphorylated on Ser-15 (H2BS14ph) by STK4/MST1 during apoptosis; which facilitates apoptotic chromatin condensation. Also phosphorylated on Ser-15 in response to DNA double strand breaks (DSBs), and in correlation with somatic hypermutation and immunoglobulin class-switch recombination. Post-translationally, glcNAcylation at Ser-113 promotes monoubiquitination of Lys-121. It fluctuates in response to extracellular glucose, and associates with transcribed genes. ADP-ribosylated by PARP1 or PARP2 on Ser-7 (H2BS6ADPr) in response to DNA damage. H2BS6ADPr promotes recruitment of CHD1L. Poly ADP-ribosylation on Glu-36 (H2BE35ADPr) by PARP1 regulates adipogenesis: it inhibits phosphorylation at Ser-37 (H2BS36ph), thereby blocking expression of pro-adipogenetic genes. In terms of processing, crotonylation (Kcr) is specifically present in male germ cells and marks testis-specific genes in post-meiotic cells, including X-linked genes that escape sex chromosome inactivation in haploid cells. Crotonylation marks active promoters and enhancers and confers resistance to transcriptional repressors. It is also associated with post-meiotically activated genes on autosomes. Post-translationally, lactylated in macrophages by EP300/P300 by using lactoyl-CoA directly derived from endogenous or exogenous lactate, leading to stimulates gene transcription.

The protein localises to the nucleus. It is found in the chromosome. In terms of biological role, core component of nucleosome. Nucleosomes wrap and compact DNA into chromatin, limiting DNA accessibility to the cellular machineries which require DNA as a template. Histones thereby play a central role in transcription regulation, DNA repair, DNA replication and chromosomal stability. DNA accessibility is regulated via a complex set of post-translational modifications of histones, also called histone code, and nucleosome remodeling. This Homo sapiens (Human) protein is Histone H2B type 1-O.